Consider the following 201-residue polypeptide: 3-isopropylmalate dehydratase small subunit (201 aa).

The protein belongs to the LeuD family. LeuD type 1 subfamily. Heterodimer of LeuC and LeuD.

The catalysed reaction is (2R,3S)-3-isopropylmalate = (2S)-2-isopropylmalate. The protein operates within amino-acid biosynthesis; L-leucine biosynthesis; L-leucine from 3-methyl-2-oxobutanoate: step 2/4. Functionally, catalyzes the isomerization between 2-isopropylmalate and 3-isopropylmalate, via the formation of 2-isopropylmaleate. The sequence is that of 3-isopropylmalate dehydratase small subunit from Dinoroseobacter shibae (strain DSM 16493 / NCIMB 14021 / DFL 12).